We begin with the raw amino-acid sequence, 340 residues long: UDP-glucose 4-epimerase (340 aa).

NAD(+) is bound by residues 16 to 17 (YI), 37 to 42 (IDNNKN), 60 to 61 (DL), 82 to 86 (FAAKT), S127, Y154, K158, and F182. Residues S127 and Y154 each contribute to the substrate site. Y154 serves as the catalytic Proton acceptor. Substrate-binding positions include N183, 199–200 (TL), 216–218 (FLY), R231, and 295–298 (RSWD).

It belongs to the NAD(P)-dependent epimerase/dehydratase family. Homodimer. It depends on NAD(+) as a cofactor.

The enzyme catalyses UDP-alpha-D-glucose = UDP-alpha-D-galactose. Its pathway is carbohydrate metabolism; galactose metabolism. Its function is as follows. Involved in the metabolism of galactose. Catalyzes the conversion of UDP-galactose (UDP-Gal) to UDP-glucose (UDP-Glc) through a mechanism involving the transient reduction of NAD. The chain is UDP-glucose 4-epimerase (galE) from Mycoplasma genitalium (strain ATCC 33530 / DSM 19775 / NCTC 10195 / G37) (Mycoplasmoides genitalium).